We begin with the raw amino-acid sequence, 159 residues long: MRPTPMTAILALSLAAAAPAMAASLKDIAPYPEAEKGFTRQVIHLPAQADESAYKLEILAGKTLQVDCNRQRLGGNLEARTLEGWGYNYYRLDNVSGPASTLMACPDGKKTEAFVPVVGDGFLLRYNSKLPVVVYVPKDVEVRYRVWSASQDVQKAKVE.

Residues 1–22 (MRPTPMTAILALSLAAAAPAMA) form the signal peptide. An intrachain disulfide couples Cys68 to Cys105.

The protein belongs to the protease inhibitor I11 (ecotin) family. As to quaternary structure, homodimer.

The protein localises to the periplasm. Its function is as follows. General inhibitor of family S1 serine proteases. In Pseudomonas putida (strain ATCC 700007 / DSM 6899 / JCM 31910 / BCRC 17059 / LMG 24140 / F1), this protein is Ecotin.